A 435-amino-acid chain; its full sequence is CUB and peptidase domain-containing protein 1 (435 aa).

The first 16 residues, 1–16, serve as a signal peptide directing secretion; that stretch reads SGFHLSFSFFRRAVCG. Residues 25-261 enclose the Peptidase S1 domain; the sequence is IVGGTVAPIN…LKSWITGKIS (237 aa). A disulfide bridge links cysteine 50 with cysteine 66. Residues histidine 65 and aspartate 116 each act as charge relay system in the active site. Cystine bridges form between cysteine 151–cysteine 218, cysteine 182–cysteine 197, cysteine 208–cysteine 237, and cysteine 322–cysteine 341. The active-site Charge relay system is the serine 212. Positions 256-378 constitute a CUB domain; it reads ITGKISRSPA…SGFHLSFSFF (123 aa).

It belongs to the peptidase S1 family. In terms of tissue distribution, component of the acid-insoluble organic matrix of the aragonitic skeleton (at protein level).

The protein localises to the secreted. The polypeptide is CUB and peptidase domain-containing protein 1 (Acropora millepora (Staghorn coral)).